Reading from the N-terminus, the 152-residue chain is Deoxyuridine 5'-triphosphate nucleotidohydrolase (152 aa).

Substrate is bound by residues arginine 71–glycine 73, asparagine 84, leucine 88–aspartate 90, and methionine 98.

Belongs to the dUTPase family. Requires Mg(2+) as cofactor.

It carries out the reaction dUTP + H2O = dUMP + diphosphate + H(+). It participates in pyrimidine metabolism; dUMP biosynthesis; dUMP from dCTP (dUTP route): step 2/2. Its function is as follows. This enzyme is involved in nucleotide metabolism: it produces dUMP, the immediate precursor of thymidine nucleotides and it decreases the intracellular concentration of dUTP so that uracil cannot be incorporated into DNA. This chain is Deoxyuridine 5'-triphosphate nucleotidohydrolase, found in Shewanella pealeana (strain ATCC 700345 / ANG-SQ1).